The primary structure comprises 486 residues: tRNA-2-methylthio-N(6)-dimethylallyladenosine synthase (486 aa).

One can recognise an MTTase N-terminal domain in the interval 35–151 (RNLYVESYGC…LPRLLATVDS (117 aa)). The [4Fe-4S] cluster site is built by cysteine 44, cysteine 80, cysteine 114, cysteine 189, cysteine 193, and cysteine 196. The region spanning 175-419 (NSNGVSAFIS…IDKQRQHSFE (245 aa)) is the Radical SAM core domain. The TRAM domain maps to 422 to 485 (LKDIGKVYQV…TGTLLGEICT (64 aa)).

The protein belongs to the methylthiotransferase family. MiaB subfamily. As to quaternary structure, monomer. [4Fe-4S] cluster serves as cofactor.

The protein localises to the cytoplasm. The catalysed reaction is N(6)-dimethylallyladenosine(37) in tRNA + (sulfur carrier)-SH + AH2 + 2 S-adenosyl-L-methionine = 2-methylsulfanyl-N(6)-dimethylallyladenosine(37) in tRNA + (sulfur carrier)-H + 5'-deoxyadenosine + L-methionine + A + S-adenosyl-L-homocysteine + 2 H(+). In terms of biological role, catalyzes the methylthiolation of N6-(dimethylallyl)adenosine (i(6)A), leading to the formation of 2-methylthio-N6-(dimethylallyl)adenosine (ms(2)i(6)A) at position 37 in tRNAs that read codons beginning with uridine. The sequence is that of tRNA-2-methylthio-N(6)-dimethylallyladenosine synthase from Amoebophilus asiaticus (strain 5a2).